A 411-amino-acid polypeptide reads, in one-letter code: Arginine deiminase 1 (411 aa).

The Amidino-cysteine intermediate role is filled by C401.

Belongs to the arginine deiminase family.

The protein localises to the cytoplasm. It catalyses the reaction L-arginine + H2O = L-citrulline + NH4(+). It participates in amino-acid degradation; L-arginine degradation via ADI pathway; carbamoyl phosphate from L-arginine: step 1/2. The protein is Arginine deiminase 1 (arcA1) of Staphylococcus epidermidis (strain ATCC 12228 / FDA PCI 1200).